The following is a 106-amino-acid chain: Urease subunit beta (106 aa).

Belongs to the urease beta subunit family. In terms of assembly, heterotrimer of UreA (gamma), UreB (beta) and UreC (alpha) subunits. Three heterotrimers associate to form the active enzyme.

Its subcellular location is the cytoplasm. It catalyses the reaction urea + 2 H2O + H(+) = hydrogencarbonate + 2 NH4(+). Its pathway is nitrogen metabolism; urea degradation; CO(2) and NH(3) from urea (urease route): step 1/1. The chain is Urease subunit beta from Prochlorococcus marinus subsp. pastoris (strain CCMP1986 / NIES-2087 / MED4).